The primary structure comprises 2764 residues: Teneurin-2 (2764 aa).

Positions 1 to 375 constitute a Teneurin N-terminal domain; sequence MDVKDRRHRS…KPSKYCSWKC (375 aa). The Cytoplasmic segment spans residues 1 to 379; it reads MDVKDRRHRS…YCSWKCAALS (379 aa). Phosphoserine is present on residues Ser90 and Ser124. Residues 111–271 are disordered; it reads TGSDADSDTE…HHHSSANSLN (161 aa). Residues 141-155 are compositionally biased toward polar residues; the sequence is SSGLSSRENSALTLT. Thr155 bears the Phosphothreonine mark. At Ser157 the chain carries Phosphoserine. Residues 159–168 are compositionally biased toward basic and acidic residues; that stretch reads NENKSDDDNG. Residues 174 to 188 show a composition bias toward low complexity; it reads TSSSSLLPSAQLPSS. A compositionally biased stretch (polar residues) spans 202 to 211; the sequence is DSNTSHQIMD. The span at 229-240 shows a compositional bias: low complexity; sequence SGPQQASSSGPP. Residues 380–400 form a helical membrane-spanning segment; the sequence is AIAAALLLAILLAYFIAMHLL. Over 401 to 2764 the chain is Extracellular; it reads GLNWQLQPAD…FLRQNEMGKR (2364 aa). 2 N-linked (GlcNAc...) asparagine glycosylation sites follow: Asn443 and Asn482. 8 consecutive EGF-like domains span residues 575 to 603, 598 to 634, 636 to 668, 669 to 701, 702 to 735, 737 to 765, 768 to 796, and 798 to 831; these read DCPR…ADCA, LGAD…AECD, PMNQ…EHCE, EVDC…NCEL, ARVQ…PDCS, VCSV…AACD, VCHP…EHCT, and DGCP…PGCN. 22 disulfides stabilise this stretch: Cys576/Cys586, Cys580/Cys591, Cys593/Cys602, Cys611/Cys622, Cys624/Cys633, Cys640/Cys651, Cys645/Cys656, Cys658/Cys667, Cys672/Cys683, Cys677/Cys688, Cys690/Cys699, Cys710/Cys723, Cys725/Cys734, Cys738/Cys748, Cys742/Cys753, Cys755/Cys764, Cys769/Cys779, Cys773/Cys784, Cys786/Cys795, Cys800/Cys810, Cys804/Cys819, and Cys821/Cys830. 3 N-linked (GlcNAc...) asparagine glycosylation sites follow: Asn915, Asn938, and Asn1257. NHL repeat units lie at residues 1262 to 1306, 1332 to 1376, 1391 to 1442, 1464 to 1491, and 1520 to 1563; these read LELR…VKSL, ARCG…NGII, LSCD…IAGR, LESA…INRL, and CYSG…VSKN. A YD 1 repeat occupies 1573–1592; that stretch reads YEAASPGEQELYVFNADGIH. N-linked (GlcNAc...) asparagine glycosylation occurs at Asn1606. YD repeat units follow at residues 1609–1629, 1672–1691, and 1692–1714; these read YSAD…LKIR, YDGN…WTTF, and YDYD…TSLH. N-linked (GlcNAc...) asparagine glycosylation is found at Asn1702, Asn1739, Asn1763, Asn1797, and Asn1882. YD repeat units lie at residues 1885–1904, 1926–1944, 1945–1965, 1972–1989, 1990–2011, 2012–2029, 2032–2052, 2055–2075, 2083–2103, 2109–2126, 2127–2153, 2155–2168, 2169–2192, 2195–2215, 2216–2236, 2238–2258, 2270–2290, and 2292–2312; these read YFFN…ERTD, YLDK…YIFE, YDSS…HSMS, YIRN…VIFD, YSDD…VFYK, YGKL…TAVT, YDET…FSCT, YRKV…EGMI, YHDN…TPLP, YDEI…GVIY, YDIN…IKEV, YEMF…MTVQ, YDSM…TKYT, YDGD…WRYS, YDLN…LMPL, YDLR…DDDG, YNSK…SVQY, and YDGV…LQYF. Residue Asn1983 is glycosylated (N-linked (GlcNAc...) asparagine). The N-linked (GlcNAc...) asparagine glycan is linked to Asn2187. Residue Asn2327 is glycosylated (N-linked (GlcNAc...) asparagine). Residues 2338-2379 form a YD 23 repeat; sequence YDLQGHLFAMESSSGEEYYVASDNTGTPLAVYSINGLMIKQL. Asn2638 carries N-linked (GlcNAc...) asparagine glycosylation.

Belongs to the tenascin family. Teneurin subfamily. As to quaternary structure, homodimer; disulfide-linked. Heterodimer with either TENM1 or TENM3. May also form heterodimer with TENM4. Derives from the membrane form by proteolytic processing. In terms of processing, derives from the plasma membrane form by proteolytic cleavage and translocates to the nucleus. Homophilic binding of the C-terminal extracellular domain stimulates its proteolytic cleavage and release in the cytoplasmic. Is subjected to rapid degradation by the proteasome pathway. As to expression, expressed in the cortex, CA1, CA2, CA3, dentate gyrus and granular layer of the hippocampus. Expressed in the Purkinje cells and molecular layer of the cerebellum.

Its subcellular location is the cell membrane. It is found in the presynaptic cell membrane. It localises to the postsynaptic cell membrane. The protein localises to the endoplasmic reticulum. The protein resides in the golgi apparatus. Its subcellular location is the synapse. It is found in the cell projection. It localises to the dendritic spine. The protein localises to the filopodium. The protein resides in the growth cone. Its subcellular location is the nucleus. It is found in the PML body. In terms of biological role, involved in neural development, regulating the establishment of proper connectivity within the nervous system. Acts as a ligand of the ADGRL1 and ADGRL3 receptors that are expressed at the surface of adjacent cells. Promotes the formation of filopodia and enlarged growth cone in neuronal cells. Mediates axon guidance and homophilic and heterophilic cell-cell adhesion. May function as a cellular signal transducer. Its function is as follows. Induces gene transcription inhibition. The chain is Teneurin-2 (Tenm2) from Mus musculus (Mouse).